Reading from the N-terminus, the 411-residue chain is ATPase family AAA domain-containing protein 3C (411 aa).

177 to 184 serves as a coordination point for ATP; it reads GPPGTGKT.

Belongs to the AAA ATPase family.

In Homo sapiens (Human), this protein is ATPase family AAA domain-containing protein 3C (ATAD3C).